A 243-amino-acid polypeptide reads, in one-letter code: Probable 2-phosphosulfolactate phosphatase (243 aa).

This sequence belongs to the ComB family. It depends on Mg(2+) as a cofactor.

The enzyme catalyses (2R)-O-phospho-3-sulfolactate + H2O = (2R)-3-sulfolactate + phosphate. In Synechococcus sp. (strain CC9605), this protein is Probable 2-phosphosulfolactate phosphatase.